Reading from the N-terminus, the 136-residue chain is Histone H3-like 3 (136 aa).

The span at 1–15 (MARTKQTARKSHGGK) shows a compositional bias: basic residues. The disordered stretch occupies residues 1–42 (MARTKQTARKSHGGKAPRTLLATKAARKSAPTTGGVKKPHRY). N6,N6,N6-trimethyllysine; alternate occurs at positions 5 and 10. 2 positions are modified to N6,N6-dimethyllysine; alternate: Lys5 and Lys10. N6-methyllysine; alternate is present on residues Lys5 and Lys10. At Lys10 the chain carries N6-acetyllysine; alternate. Residue Ser11 is modified to Phosphoserine. N6-acetyllysine is present on Lys15. Lys24 and Lys28 each carry N6-methyllysine; alternate. Lys24 carries the post-translational modification N6-acetyllysine; alternate. Position 28 is an N6,N6,N6-trimethyllysine; alternate (Lys28). Lys28 carries the post-translational modification N6,N6-dimethyllysine; alternate. At Ser29 the chain carries Phosphoserine. Lys37 carries the post-translational modification N6,N6,N6-trimethyllysine; alternate. Lys37 carries the post-translational modification N6,N6-dimethyllysine; alternate. Residue Lys37 is modified to N6-methyllysine; alternate.

The protein belongs to the histone H3 family. The nucleosome is a histone octamer containing two molecules each of H2A, H2B, H3 and H4 assembled in one H3-H4 heterotetramer and two H2A-H2B heterodimers. The octamer wraps approximately 147 bp of DNA. In terms of tissue distribution, expressed in roots, seedlings, leaves and open flowers.

The protein resides in the nucleus. It localises to the chromosome. Functionally, core component of nucleosome. Nucleosomes wrap and compact DNA into chromatin, limiting DNA accessibility to the cellular machineries which require DNA as a template. Histones thereby play a central role in transcription regulation, DNA repair, DNA replication and chromosomal stability. DNA accessibility is regulated via a complex set of post-translational modifications of histones, also called histone code, and nucleosome remodeling. This chain is Histone H3-like 3, found in Arabidopsis thaliana (Mouse-ear cress).